The sequence spans 410 residues: Phosphoglycerate kinase (410 aa).

Substrate is bound by residues 19-21, R34, 57-60, R114, and R154; these read DLN and HQGK. ATP-binding positions include E332 and 358-361; that span reads GGHS.

The protein belongs to the phosphoglycerate kinase family. Homodimer.

Its subcellular location is the cytoplasm. It catalyses the reaction (2R)-3-phosphoglycerate + ATP = (2R)-3-phospho-glyceroyl phosphate + ADP. It participates in carbohydrate degradation; glycolysis; pyruvate from D-glyceraldehyde 3-phosphate: step 2/5. The sequence is that of Phosphoglycerate kinase (pgk) from Pyrococcus horikoshii (strain ATCC 700860 / DSM 12428 / JCM 9974 / NBRC 100139 / OT-3).